Here is a 1391-residue protein sequence, read N- to C-terminus: Nuclear pore complex protein Nup155 (1391 aa).

O-linked (GlcNAc) serine glycosylation is present at S526. Disordered regions lie at residues S604–P630 and Q985–S1012. At S1057 the chain carries Phosphoserine.

This sequence belongs to the non-repetitive/WGA-negative nucleoporin family. Interacts with GLE1 and NUP35/NUP53. Able to form a heterotrimer with GLE1 and NUP42 in vitro. Forms a complex with NUP35, NUP93, NUP205 and lamin B. In terms of processing, phosphorylated. Phosphorylation and dephosphorylation may be important for the function of NUP155 and may play a role in the reversible disassembly of the nuclear pore complex during mitosis. Post-translationally, disulfide-linked to NUP62. The inner channel of the NPC has a different redox environment from the cytoplasm and allows the formation of interchain disulfide bonds between some nucleoporins, the significant increase of these linkages upon oxidative stress reduces the permeability of the NPC.

It is found in the nucleus. It localises to the nuclear pore complex. The protein resides in the nucleus membrane. Essential component of nuclear pore complex. Could be essessential for embryogenesis. Nucleoporins may be involved both in binding and translocating proteins during nucleocytoplasmic transport. The protein is Nuclear pore complex protein Nup155 (Nup155) of Mus musculus (Mouse).